A 239-amino-acid polypeptide reads, in one-letter code: Ribose-5-phosphate isomerase A (239 aa).

Residues 40–43 (SGST), 96–99 (DGAD), and 110–113 (KGGG) each bind substrate. Glu119 acts as the Proton acceptor in catalysis. Lys137 is a substrate binding site.

Belongs to the ribose 5-phosphate isomerase family. In terms of assembly, homodimer.

The catalysed reaction is aldehydo-D-ribose 5-phosphate = D-ribulose 5-phosphate. It functions in the pathway carbohydrate degradation; pentose phosphate pathway; D-ribose 5-phosphate from D-ribulose 5-phosphate (non-oxidative stage): step 1/1. Its function is as follows. Catalyzes the reversible conversion of ribose-5-phosphate to ribulose 5-phosphate. The polypeptide is Ribose-5-phosphate isomerase A (Methanococcus maripaludis (strain DSM 14266 / JCM 13030 / NBRC 101832 / S2 / LL)).